Reading from the N-terminus, the 301-residue chain is MASRYVAVGMMLSQTVVGVLGSFSLLLHYLSLHYIGCRLRSADLIVKHLIAASFLTLLCKGVPQTMAAFRVRYFLNAIGCKLVFYLHRVGRGVSTGTTCLLSVFQVITVSSRKSRWAKLKEKAPKHVGFSVLLCWILCMLVNIIFPIYVTGKRNHTNITVNKDLGDCCGRGNNKIAQTLRAMLLSFPDVLCLGFMLWASSSMVCILHRHKQRVQHIHRSNLSPRASPENRATQSILIPVSTFVSSYTLSCLLQVCMALLDNPNSLLVNTSALMSACFPTLSPFVLMSCDPSVYRLCFAWKR.

The Extracellular segment spans residues M1–T15. A helical transmembrane segment spans residues V16–G36. The Cytoplasmic segment spans residues C37–H48. The helical transmembrane segment at L49–F69 threads the bilayer. Topologically, residues R70–R88 are extracellular. A helical transmembrane segment spans residues V89–I107. At T108–H126 the chain is on the cytoplasmic side. The chain crosses the membrane as a helical span at residues V127 to I147. Residues Y148–S185 lie on the Extracellular side of the membrane. 2 N-linked (GlcNAc...) asparagine glycosylation sites follow: N154 and N157. A helical transmembrane segment spans residues F186–L206. At H207 to S234 the chain is on the cytoplasmic side. The helical transmembrane segment at I235–C255 threads the bilayer. Topologically, residues M256–S264 are extracellular. Residues L265 to L285 form a helical membrane-spanning segment. At M286–R301 the chain is on the cytoplasmic side.

The protein belongs to the G-protein coupled receptor 1 family.

Its subcellular location is the cell membrane. Functionally, putative pheromone receptor. The protein is Vomeronasal type-1 receptor 4 (VN1R4) of Pongo pygmaeus (Bornean orangutan).